A 1405-amino-acid chain; its full sequence is DNA-directed RNA polymerase subunit beta' (1405 aa).

Positions 70, 72, 85, and 88 each coordinate Zn(2+). Positions 460, 462, and 464 each coordinate Mg(2+). 4 residues coordinate Zn(2+): cysteine 815, cysteine 889, cysteine 896, and cysteine 899. The disordered stretch occupies residues 1363–1388 (LAHHAERRRRREDPESTANPSAFDVE).

It belongs to the RNA polymerase beta' chain family. In terms of assembly, the RNAP catalytic core consists of 2 alpha, 1 beta, 1 beta' and 1 omega subunit. When a sigma factor is associated with the core the holoenzyme is formed, which can initiate transcription. Requires Mg(2+) as cofactor. Zn(2+) serves as cofactor.

The enzyme catalyses RNA(n) + a ribonucleoside 5'-triphosphate = RNA(n+1) + diphosphate. DNA-dependent RNA polymerase catalyzes the transcription of DNA into RNA using the four ribonucleoside triphosphates as substrates. This chain is DNA-directed RNA polymerase subunit beta', found in Chromohalobacter salexigens (strain ATCC BAA-138 / DSM 3043 / CIP 106854 / NCIMB 13768 / 1H11).